The sequence spans 114 residues: Large ribosomal subunit protein uL22 (114 aa).

This sequence belongs to the universal ribosomal protein uL22 family. As to quaternary structure, part of the 50S ribosomal subunit.

Functionally, this protein binds specifically to 23S rRNA; its binding is stimulated by other ribosomal proteins, e.g. L4, L17, and L20. It is important during the early stages of 50S assembly. It makes multiple contacts with different domains of the 23S rRNA in the assembled 50S subunit and ribosome. In terms of biological role, the globular domain of the protein is located near the polypeptide exit tunnel on the outside of the subunit, while an extended beta-hairpin is found that lines the wall of the exit tunnel in the center of the 70S ribosome. This chain is Large ribosomal subunit protein uL22, found in Lysinibacillus sphaericus (strain C3-41).